A 501-amino-acid chain; its full sequence is Acetylcholine receptor subunit beta (501 aa).

An N-terminal signal peptide occupies residues 1–23 (MALGALLLLLGVLGTPLAPGARG). Topologically, residues 24 to 244 (SEAEGQLIKK…VIFYLIIRRK (221 aa)) are extracellular. A disulfide bond links C151 and C165. N164 carries N-linked (GlcNAc...) asparagine glycosylation. 3 helical membrane passes run 245-269 (PLFY…VFYL), 277-295 (MGLS…LLLA), and 311-332 (YLMF…VLNL). Over 333–469 (HHRSPHTHQM…WQFVAMVVDR (137 aa)) the chain is Cytoplasmic. The disordered stretch occupies residues 362–382 (RPKPERDQLPEPHHSLSPRSG). Residues 363–375 (PKPERDQLPEPHH) are compositionally biased toward basic and acidic residues. Y390 is subject to Phosphotyrosine; by Tyr-kinases. Residues 470 to 488 (LFLWTFIVFTSVGTLVIFL) form a helical membrane-spanning segment.

It belongs to the ligand-gated ion channel (TC 1.A.9) family. Acetylcholine receptor (TC 1.A.9.1) subfamily. Beta-1/CHRNB1 sub-subfamily. Pentamer of two alpha chains, and one each of the beta, delta, and gamma (in immature muscle) or epsilon (in mature muscle) chains. The muscle heteropentamer composed of alpha-1, beta-1, delta, epsilon subunits interacts with the alpha-conotoxin ImII.

The protein resides in the postsynaptic cell membrane. It is found in the cell membrane. It catalyses the reaction K(+)(in) = K(+)(out). It carries out the reaction Na(+)(in) = Na(+)(out). Its function is as follows. After binding acetylcholine, the AChR responds by an extensive change in conformation that affects all subunits and leads to opening of an ion-conducting channel across the plasma membrane. This chain is Acetylcholine receptor subunit beta (Chrnb1), found in Mus musculus (Mouse).